A 403-amino-acid chain; its full sequence is Glucosyl-3-phosphoglycerate synthase (403 aa).

A divalent metal cation is bound at residue Asp150. Gly189–Thr192 serves as a coordination point for (2R)-3-phosphoglycerate. His273 serves as a coordination point for a divalent metal cation.

Belongs to the glycosyltransferase 2 family. As to quaternary structure, homodimer. The cofactor is Mn(2+). Requires Co(2+) as cofactor. Mg(2+) serves as cofactor. It depends on Ni(2+) as a cofactor.

The catalysed reaction is an NDP-alpha-D-glucose + (2R)-3-phosphoglycerate = (2R)-2-O-(alpha-D-glucopyranosyl)-3-phospho-glycerate + a ribonucleoside 5'-diphosphate + H(+). Its function is as follows. Involved in the biosynthesis of 6-O-methylglucose lipopolysaccarides (MGLPs). Catalyzes the transfer of a glucose (Glc) moiety from uridine diphosphate (UDP-Glc) to the position 2 of 3-phospho-D-glycerate (3-PGA) to form glucosyl-3-phosphoglycerate (GPG). GpgS is most active with UDP-glucose, followed by GDP-glucose, ADP-glucose, and to a lesser extent, TDP-glucose. 3-PGA is the only acceptor for these glucosyl donors. The chain is Glucosyl-3-phosphoglycerate synthase from Persephonella marina (strain DSM 14350 / EX-H1).